We begin with the raw amino-acid sequence, 705 residues long: Complement C1r subcomponent (705 aa).

The N-terminal stretch at 1–17 (MWLLYLLVPALFCRAGG) is a signal peptide. The region spanning 18-141 (SIPIPQKLFG…KGFLAYYQAV (124 aa)) is the CUB 1 domain. Ca(2+)-binding residues include glutamate 66, aspartate 74, and aspartate 119. Cysteine 71 and cysteine 89 are disulfide-bonded. Asparagine 125 is a glycosylation site (N-linked (GlcNAc...) asparagine). Ca(2+) is bound by residues aspartate 142, leucine 143, and glutamate 145. Positions 142–190 (DLDECASRSKSGEEDPQPQCQHLCHNYVGGYFCSCRPGYELQEDTHSCQ) constitute an EGF-like; calcium-binding domain. 4 cysteine pairs are disulfide-bonded: cysteine 146–cysteine 165, cysteine 161–cysteine 174, cysteine 176–cysteine 189, and cysteine 193–cysteine 220. Ca(2+) is bound by residues asparagine 167, tyrosine 168, and glycine 171. Asparagine 167 is modified ((3R)-3-hydroxyasparagine). The CUB 2 domain occupies 193–305 (CSSELYTEAS…RGWKLRYTTE (113 aa)). Serine 206 is subject to Phosphoserine; by CK2. Asparagine 221 carries an N-linked (GlcNAc...) asparagine glycan. Positions 243, 253, 290, and 294 each coordinate Ca(2+). Cysteine 250 and cysteine 268 are joined by a disulfide. Sushi domains lie at 307 to 373 (IKCP…RCKI) and 374 to 449 (KDCG…RCLP). Intrachain disulfides connect cysteine 309/cysteine 358, cysteine 338/cysteine 371, cysteine 376/cysteine 429, cysteine 406/cysteine 447, and cysteine 451/cysteine 577. Positions 464–702 (IIGGQKAKMG…YVDWIKKEME (239 aa)) constitute a Peptidase S1 domain. Histidine 502 acts as the Charge relay system in catalysis. N-linked (GlcNAc...) asparagine glycosylation is present at asparagine 514. Aspartate 557 functions as the Charge relay system in the catalytic mechanism. Asparagine 581 carries N-linked (GlcNAc...) asparagine glycosylation. 2 disulfide bridges follow: cysteine 620–cysteine 639 and cysteine 650–cysteine 680. Serine 654 functions as the Charge relay system in the catalytic mechanism.

It belongs to the peptidase S1 family. As to quaternary structure, core component of the complement C1 complex, a calcium-dependent complex composed of 1 molecule of the C1Q subcomplex, 2 molecules of C1R and 2 molecules of C1S. The C1Q subcomplex is composed 18 subunits: 3 chains of C1QA, C1QB, and C1QC trimerize to form 6 collagen-like triple helices connected to six globular ligand-recognition modules. Within the C1 complex, C1R is a dimer of identical chains, each of which is activated by cleavage into two chains, heavy and light, connected by disulfide bonds. Post-translationally, cleaved and activated by autocatalytic processing to generate Complement C1r subcomponent heavy and light chains that are connected by disulfide bonds. In terms of processing, the iron and 2-oxoglutarate dependent 3-hydroxylation of aspartate and asparagine is (R) stereospecific within EGF domains.

Its subcellular location is the secreted. The protein resides in the cell surface. It catalyses the reaction Selective cleavage of Lys(or Arg)-|-Ile bond in complement subcomponent C1s to form the active form of C1s (EC 3.4.21.42).. Activated by the C1Q subcomplex of the C1 complex following C1Q binding to immunoglobulins (IgG or IgM) complexed with antigens to form antigen-antibody complexes on the surface of pathogens. Immunoglobulin-binding promotes autoactivation of C1R, which results in the cleavage of the Arg-Ile bond in the catalytic domain. Its function is as follows. Serine protease component of the complement C1 complex, a multiprotein complex that initiates the classical pathway of the complement system, a cascade of proteins that leads to phagocytosis and breakdown of pathogens and signaling that strengthens the adaptive immune system. C1R catalyzes the first enzymatic step in the classical complement pathway: it is activated by the C1Q subcomplex of the C1 complex, which associates with IgG or IgM immunoglobulins complexed with antigens to form antigen-antibody complexes on the surface of pathogens. Immunoglobulin-binding promotes the autocatalytic cleavage and activation of C1R. Activated C1R then cleaves and activates C1S, the second protease of the classical complement pathway. It is unclear if C1R activates C1S within single, strained C1 complexes or between neighboring C1 complexes on surfaces. The polypeptide is Complement C1r subcomponent (Homo sapiens (Human)).